Reading from the N-terminus, the 413-residue chain is Transcription factor E2F4 (413 aa).

The tract at residues 1–20 (MAEAGPQAPPPPGTPSRHEK) is disordered. Ala2 carries the N-acetylalanine modification. The DNA-binding element occupies 16 to 85 (SRHEKSLGLL…KNSIQWKGVG (70 aa)). The segment at 43 to 65 (LKLAADTLAVRQKRRIYDITNVL) is leucine-zipper. The DEF box motif lies at 48 to 85 (DTLAVRQKRRIYDITNVLEGIGLIEKKSKNSIQWKGVG). Positions 86–181 (PGCNTREIAD…GLNGQKKYQI (96 aa)) are dimerization. Positions 211-340 (PPEDLLQSPS…PSTSFEPIKA (130 aa)) are disordered. Composition is skewed to polar residues over residues 234–249 (AQSQEASRPNSPQLTP) and 293–306 (TLDTRPLQSSALLD). Residues 307–327 (SSSSSSSSSSSSSNSNSSSSS) are compositionally biased toward low complexity. A transactivation region spans residues 337-413 (PIKADPTGVL…DLFDVPVLNL (77 aa)). Residue Ser384 is modified to Phosphoserine. Positions 389–392 (DHDY) match the HCFC1-binding-motif (HBM) motif. The tract at residues 390-407 (HDYIYNLDESEGVCDLFD) is interaction with RBL1 and RBL2.

The protein belongs to the E2F/DP family. As to quaternary structure, component of the DRTF1/E2F transcription factor complex. Binds cooperatively with TFDP1/Dp-1 to E2F sites. The E2F4/TFDP1 dimer interacts preferentially with pocket protein RBL1, which inhibits the E2F transactivation domain. Lower affinity interaction has been found with retinoblastoma protein RB1. Interacts with TRRAP, which probably mediates its interaction with histone acetyltransferase complexes, leading to transcription activation. Interacts with HCFC1. Component of the DREAM complex (also named LINC complex) at least composed of E2F4, E2F5, LIN9, LIN37, LIN52, LIN54, MYBL1, MYBL2, RBL1, RBL2, RBBP4, TFDP1 and TFDP2. The complex exists in quiescent cells where it represses cell cycle-dependent genes. It dissociates in S phase when LIN9, LIN37, LIN52 and LIN54 form a subcomplex that binds to MYBL2. Interacts with PML (isoform PML-1, isoform PML-2, isoform PML-3, isoform PML-4 and isoform PML-5). Interacts with CEBPA (when phosphorylated). Post-translationally, differentially phosphorylated in vivo. As to expression, found in all tissue examined including heart, brain, placenta, lung, liver, skeletal muscle, kidney and pancreas.

The protein localises to the nucleus. Its function is as follows. Transcription activator that binds DNA cooperatively with DP proteins through the E2 recognition site, 5'-TTTC[CG]CGC-3' found in the promoter region of a number of genes whose products are involved in cell cycle regulation or in DNA replication. The DRTF1/E2F complex functions in the control of cell-cycle progression from G1 to S phase. E2F4 binds with high affinity to RBL1 and RBL2. In some instances can also bind RB1. Specifically required for multiciliate cell differentiation: together with MCIDAS and E2F5, binds and activate genes required for centriole biogenesis. This Homo sapiens (Human) protein is Transcription factor E2F4 (E2F4).